The primary structure comprises 634 residues: Kinesin-like protein KIF22 (634 aa).

The region spanning 19 to 345 (RVRVAVRLRP…LNFAAKSKQI (327 aa)) is the Kinesin motor domain. Residue 103–110 (GPTGAGKT) participates in ATP binding. The interval 357–406 (APTIAPGKRTREEQEAGGSGEPQNKRSKEGKKAEHSPSPPLHPQSSPDSS) is disordered. Residues 379-391 (QNKRSKEGKKAEH) show a composition bias toward basic and acidic residues. Residues 421–471 (SAERERLNLLKTVAQSRKEIQMLKEKQKELEDKANMFNKQKETTEKESKDA) are a coiled coil.

It belongs to the TRAFAC class myosin-kinesin ATPase superfamily. Kinesin family. Post-translationally, ubiquitinated, leading to its subsequent proteasomal degradation.

It is found in the nucleus. The protein resides in the cytoplasm. Its subcellular location is the cytoskeleton. Its function is as follows. Kinesin family member that is involved in spindle formation and the movements of chromosomes during mitosis and meiosis. Binds to microtubules and to DNA. The sequence is that of Kinesin-like protein KIF22 (kif22) from Danio rerio (Zebrafish).